The following is a 113-amino-acid chain: Hydrogenase maturation factor HypA (113 aa).

A Ni(2+)-binding site is contributed by histidine 2. Residues cysteine 73, cysteine 76, cysteine 89, and cysteine 92 each contribute to the Zn(2+) site.

This sequence belongs to the HypA/HybF family.

Functionally, involved in the maturation of [NiFe] hydrogenases. Required for nickel insertion into the metal center of the hydrogenase. The protein is Hydrogenase maturation factor HypA of Dechloromonas aromatica (strain RCB).